Consider the following 286-residue polypeptide: Putative 2-aminoethylphosphonate transport system permease protein PhnU (286 aa).

A run of 6 helical transmembrane segments spans residues 19–39, 76–96, 111–131, 150–170, 202–222, and 254–274; these read WLLL…SLIV, FFAT…LVFI, FIAL…GSAG, FLYS…PLVM, VIFP…LLLT, and YTVA…LFSL. One can recognise an ABC transmembrane type-1 domain in the interval 68-275; the sequence is LLNTLQIAFF…VLSLGLFSLY (208 aa).

It belongs to the binding-protein-dependent transport system permease family.

It is found in the cell inner membrane. Probably part of the PhnSTUV complex (TC 3.A.1.11.5) involved in 2-aminoethylphosphonate import. Probably responsible for the translocation of the substrate across the membrane. In Salmonella typhimurium (strain LT2 / SGSC1412 / ATCC 700720), this protein is Putative 2-aminoethylphosphonate transport system permease protein PhnU (phnU).